We begin with the raw amino-acid sequence, 160 residues long: S-ribosylhomocysteine lyase (160 aa).

Residues H57, H61, and C127 each contribute to the Fe cation site.

This sequence belongs to the LuxS family. In terms of assembly, homodimer. Fe cation serves as cofactor.

The catalysed reaction is S-(5-deoxy-D-ribos-5-yl)-L-homocysteine = (S)-4,5-dihydroxypentane-2,3-dione + L-homocysteine. Involved in the synthesis of autoinducer 2 (AI-2) which is secreted by bacteria and is used to communicate both the cell density and the metabolic potential of the environment. The regulation of gene expression in response to changes in cell density is called quorum sensing. Catalyzes the transformation of S-ribosylhomocysteine (RHC) to homocysteine (HC) and 4,5-dihydroxy-2,3-pentadione (DPD). The sequence is that of S-ribosylhomocysteine lyase from Streptococcus mutans serotype c (strain ATCC 700610 / UA159).